We begin with the raw amino-acid sequence, 380 residues long: Crotonobetainyl-CoA reductase (380 aa).

Belongs to the acyl-CoA dehydrogenase family. As to quaternary structure, homotetramer. The cofactor is FAD.

The protein resides in the cytoplasm. It carries out the reaction 4-(trimethylamino)butanoyl-CoA + oxidized [electron-transfer flavoprotein] + H(+) = crotonobetainyl-CoA + reduced [electron-transfer flavoprotein]. It participates in amine and polyamine metabolism; carnitine metabolism. Its function is as follows. Catalyzes the reduction of crotonobetainyl-CoA to gamma-butyrobetainyl-CoA. The polypeptide is Crotonobetainyl-CoA reductase (Shigella flexneri serotype 5b (strain 8401)).